A 213-amino-acid polypeptide reads, in one-letter code: Uridine kinase (213 aa).

15-22 (GASASGKS) serves as a coordination point for ATP.

It belongs to the uridine kinase family.

The protein localises to the cytoplasm. The enzyme catalyses uridine + ATP = UMP + ADP + H(+). It catalyses the reaction cytidine + ATP = CMP + ADP + H(+). It functions in the pathway pyrimidine metabolism; CTP biosynthesis via salvage pathway; CTP from cytidine: step 1/3. The protein operates within pyrimidine metabolism; UMP biosynthesis via salvage pathway; UMP from uridine: step 1/1. The polypeptide is Uridine kinase (Salmonella agona (strain SL483)).